The primary structure comprises 369 residues: Dehydrogenase pigH (369 aa).

Residues 13–367 (KAPLLEVKAA…QGVSAKKIVV (355 aa)) form the Enoyl reductase (ER) domain. 44–49 (IDWLIQ) contacts NADP(+). Residues Asn79 and Asn101 are each glycosylated (N-linked (GlcNAc...) asparagine). NADP(+) is bound by residues 197-200 (SRKN) and Tyr215. The chain crosses the membrane as a helical span at residues 280 to 300 (TIIFFVSWIISFKFKGLLKGI). 360-361 (VS) is an NADP(+) binding site.

It belongs to the zinc-containing alcohol dehydrogenase family.

The protein localises to the membrane. Its pathway is secondary metabolite biosynthesis. Its function is as follows. Dehydrogenase; part of the gene cluster that mediates the biosynthesis of azaphilone pigments (MonAzPs), a complex mixture of compounds with a common azaphilone skeleton very widely used as food colorants. Within the pathway, pigH might be involved in the late steps of yellow pigments monascin and ankaflavin biosynthesis. The first step of the pathway is performed by the nrPKS pigA that forms the hexaketide precursor from successive condensations of five malonyl-CoA units, with a simple acetyl-CoA starter unit. The role of esterase pigG is not clear, but it may play at most a supplementary role in the formation of the benzaldehyde produced by the pigA nrPKS. This very reactive benzaldehyde is intercepted by the pigC ketoreductase that to provide the first stable enzyme-free MonAzPs intermediate, 6-(4-hydroxy-2-oxopentyl)-3-methyl-2,4-dioxocyclohexane carbaldehyde, also known as M7PKS-1. The FAD-dependent monooxygenase pigN hydroxylates M7PKS-1 at C-4, which triggers the formation of the pyran ring. PigJ, pigK and pigD are involved in the acetylation of the pyran ring. PigJ and pigK form the two subunits of a dedicated fungal FAS that produces the side chain fatty acyl moiety of MonAzPs and pigD transfers the fatty acyl chain to the C-4 alcohol. PigM and pigO are involved in the elimination of the omega-1 alcohol. PigM acts as an O-acetyltransferase that synthesizes the putative O-11 acetyl intermediate whereas pigO eliminates acetic acid to yield an intermediate with a C10(11) double bond. The dehydration of the C-11 alcohol followed by the reduction of the C6(7) double bond by the NAD(P)H-dependent oxidoreductase pigE increases the electrophilicity of the C-5 ketone of the resulting acyl benzopyran. This in turn sets up the C-5 ketone for an intramolecular Knoevenagel aldol condensation with the C-20 enol of the side chain. This condensation affords the characteristic linear tricyclic carbon skeletons of the yellow pigments that serve as the common precursors for the classical yellow pigments monascin and ankaflavin, orange pigments rubopunctatin and monascorubrin, and red pigments ribropunctamine and monascorubramine. The FAD-dependent oxidoreductase pigF is especially invoved in the biosynthesis of orange and red pigments via desaturation of C6(7). In Monascus ruber (Mold), this protein is Dehydrogenase pigH.